A 295-amino-acid chain; its full sequence is Indole-3-glycerol phosphate synthase (295 aa).

This sequence belongs to the TrpC family.

The enzyme catalyses 1-(2-carboxyphenylamino)-1-deoxy-D-ribulose 5-phosphate + H(+) = (1S,2R)-1-C-(indol-3-yl)glycerol 3-phosphate + CO2 + H2O. Its pathway is amino-acid biosynthesis; L-tryptophan biosynthesis; L-tryptophan from chorismate: step 4/5. This Synechococcus sp. (strain CC9605) protein is Indole-3-glycerol phosphate synthase.